A 248-amino-acid polypeptide reads, in one-letter code: MQAHPNTVDPSEIAKFEAMAAEWWDPHGKFKPLHMLNPCRLDYITRQIAGEFDRDLGTERPFAGLRLLDIGCGGGLLSEPMARLGAEVVGADAAEGNLPVARIHAEQSGLEIDYRHTTAEALAEAGEQFDVVLNMEVVEHVADPLSYLRATHDLLKPGGLQICSTINRNPKSYAMAILGAEVVMRWLPRGTHDWSKFITPDELFDLLRQAGLEPVDRKGFVFNPISWQWSISDRDLSVNYVTASLRPR.

Positions 40, 71, 92, and 135 each coordinate S-adenosyl-L-methionine.

This sequence belongs to the methyltransferase superfamily. UbiG/COQ3 family.

It carries out the reaction a 3-demethylubiquinol + S-adenosyl-L-methionine = a ubiquinol + S-adenosyl-L-homocysteine + H(+). The enzyme catalyses a 3-(all-trans-polyprenyl)benzene-1,2-diol + S-adenosyl-L-methionine = a 2-methoxy-6-(all-trans-polyprenyl)phenol + S-adenosyl-L-homocysteine + H(+). The protein operates within cofactor biosynthesis; ubiquinone biosynthesis. In terms of biological role, O-methyltransferase that catalyzes the 2 O-methylation steps in the ubiquinone biosynthetic pathway. The protein is Ubiquinone biosynthesis O-methyltransferase of Ruegeria pomeroyi (strain ATCC 700808 / DSM 15171 / DSS-3) (Silicibacter pomeroyi).